A 102-amino-acid polypeptide reads, in one-letter code: Small ribosomal subunit protein uS10 (102 aa).

This sequence belongs to the universal ribosomal protein uS10 family. As to quaternary structure, part of the 30S ribosomal subunit.

In terms of biological role, involved in the binding of tRNA to the ribosomes. The protein is Small ribosomal subunit protein uS10 of Gluconacetobacter diazotrophicus (strain ATCC 49037 / DSM 5601 / CCUG 37298 / CIP 103539 / LMG 7603 / PAl5).